The chain runs to 69 residues: Ribosome modulation factor (69 aa).

Belongs to the ribosome modulation factor family.

It is found in the cytoplasm. Its function is as follows. During stationary phase, converts 70S ribosomes to an inactive dimeric form (100S ribosomes). The protein is Ribosome modulation factor of Hahella chejuensis (strain KCTC 2396).